Reading from the N-terminus, the 412-residue chain is Multifunctional CCA protein (412 aa).

ATP is bound by residues glycine 8 and arginine 11. The CTP site is built by glycine 8 and arginine 11. Mg(2+)-binding residues include aspartate 21 and aspartate 23. Positions 91, 137, and 140 each coordinate ATP. Arginine 91, arginine 137, and arginine 140 together coordinate CTP. Residues 225–326 (TGIHVMMVID…ADMLQATDAY (102 aa)) form the HD domain.

Belongs to the tRNA nucleotidyltransferase/poly(A) polymerase family. Bacterial CCA-adding enzyme type 1 subfamily. In terms of assembly, monomer. Can also form homodimers and oligomers. Mg(2+) is required as a cofactor. Requires Ni(2+) as cofactor.

It carries out the reaction a tRNA precursor + 2 CTP + ATP = a tRNA with a 3' CCA end + 3 diphosphate. The catalysed reaction is a tRNA with a 3' CCA end + 2 CTP + ATP = a tRNA with a 3' CCACCA end + 3 diphosphate. Catalyzes the addition and repair of the essential 3'-terminal CCA sequence in tRNAs without using a nucleic acid template. Adds these three nucleotides in the order of C, C, and A to the tRNA nucleotide-73, using CTP and ATP as substrates and producing inorganic pyrophosphate. tRNA 3'-terminal CCA addition is required both for tRNA processing and repair. Also involved in tRNA surveillance by mediating tandem CCA addition to generate a CCACCA at the 3' terminus of unstable tRNAs. While stable tRNAs receive only 3'-terminal CCA, unstable tRNAs are marked with CCACCA and rapidly degraded. In Nitrosomonas eutropha (strain DSM 101675 / C91 / Nm57), this protein is Multifunctional CCA protein.